A 463-amino-acid polypeptide reads, in one-letter code: Protein phosphatase PP2A regulatory subunit B (463 aa).

WD repeat units lie at residues Thr27–Glu66 and Glu87–Val128. Ser134 carries the phosphoserine modification. WD repeat units lie at residues Ala174–Asn212, Glu223–Asn263, Glu282–Lys320, and Glu337–Arg378.

The protein belongs to the phosphatase 2A regulatory subunit B family. PP2A exists in several trimeric forms, all of which consist of a core composed of a catalytic subunit associated with a 65 kDa (PR65) (Subunit A) and a 55 kDa (PR55) (Subunit B) regulatory subunit.

Its function is as follows. Phosphatase 2A affects a variety of biological processes in the cell such as transcription, cell cycle progression and cellular morphogenesis, and provides an initial identification of critical substrates for this phosphatase. The regulatory subunit may direct the catalytic subunit to distinct, albeit overlapping, subsets of substrates. The sequence is that of Protein phosphatase PP2A regulatory subunit B (pab1) from Schizosaccharomyces pombe (strain 972 / ATCC 24843) (Fission yeast).